Consider the following 282-residue polypeptide: Pantothenate synthetase (282 aa).

Position 30–37 (30–37) interacts with ATP; it reads MGFLHDGH. His-37 (proton donor) is an active-site residue. Position 60 (Gln-60) interacts with (R)-pantoate. Position 60 (Gln-60) interacts with beta-alanine. ATP is bound at residue 146–149; sequence GQKD. Gln-152 serves as a coordination point for (R)-pantoate. Residues Ile-175 and 183-186 each bind ATP; that span reads KSSR.

It belongs to the pantothenate synthetase family. In terms of assembly, homodimer.

Its subcellular location is the cytoplasm. The catalysed reaction is (R)-pantoate + beta-alanine + ATP = (R)-pantothenate + AMP + diphosphate + H(+). The protein operates within cofactor biosynthesis; (R)-pantothenate biosynthesis; (R)-pantothenate from (R)-pantoate and beta-alanine: step 1/1. In terms of biological role, catalyzes the condensation of pantoate with beta-alanine in an ATP-dependent reaction via a pantoyl-adenylate intermediate. This chain is Pantothenate synthetase, found in Campylobacter jejuni subsp. jejuni serotype O:6 (strain 81116 / NCTC 11828).